A 143-amino-acid polypeptide reads, in one-letter code: Hemoglobin subunit alpha-2 (143 aa).

Ser-2 bears the N-acetylserine mark. The region spanning 2 to 143 (SLTEKDKAAV…LSLALAEKYR (142 aa)) is the Globin domain. Residue His-60 participates in O2 binding. His-89 lines the heme b pocket.

The protein belongs to the globin family. Hb2 is a heterotetramer of two alpha-2 chains and two beta-1 chains; Hb3 is a heterotetramer of two alpha-2 chains and two beta-2 chains. As to expression, red blood cells.

Its function is as follows. Involved in oxygen transport from gills to the various peripheral tissues. The polypeptide is Hemoglobin subunit alpha-2 (hba2) (Anarhichas minor (Arctic spotted wolffish)).